The sequence spans 249 residues: 3-deoxy-manno-octulosonate cytidylyltransferase (249 aa).

It belongs to the KdsB family.

The protein localises to the cytoplasm. The enzyme catalyses 3-deoxy-alpha-D-manno-oct-2-ulosonate + CTP = CMP-3-deoxy-beta-D-manno-octulosonate + diphosphate. The protein operates within nucleotide-sugar biosynthesis; CMP-3-deoxy-D-manno-octulosonate biosynthesis; CMP-3-deoxy-D-manno-octulosonate from 3-deoxy-D-manno-octulosonate and CTP: step 1/1. It functions in the pathway bacterial outer membrane biogenesis; lipopolysaccharide biosynthesis. Its function is as follows. Activates KDO (a required 8-carbon sugar) for incorporation into bacterial lipopolysaccharide in Gram-negative bacteria. This is 3-deoxy-manno-octulosonate cytidylyltransferase from Coxiella burnetii (strain CbuG_Q212) (Coxiella burnetii (strain Q212)).